Consider the following 608-residue polypeptide: Nuclear protein localization protein 4 homolog (608 aa).

Residue Ala-2 is modified to N-acetylalanine. Lys-179 carries the N6-acetyllysine modification. In terms of domain architecture, MPN spans 226–363; sequence IMFENHTVAD…ICRLSPDGHF (138 aa). Residues 580–608 form a RanBP2-type zinc finger; the sequence is TSAMWACQHCTFMNQPGTGHCEMCSLPRT.

The protein belongs to the NPL4 family. In terms of assembly, heterodimer with UFD1. The heterodimer binds ubiquitinated proteins. The heterodimer binds to VCP and inhibits Golgi membrane fusion. Interacts with ZFAND2B; probably through VCP.

It is found in the cytoplasm. It localises to the cytosol. The protein resides in the endoplasmic reticulum. Its subcellular location is the nucleus. It functions in the pathway protein degradation; proteasomal ubiquitin-dependent pathway. In terms of biological role, the ternary complex containing UFD1, VCP and NPLOC4 binds ubiquitinated proteins and is necessary for the export of misfolded proteins from the ER to the cytoplasm, where they are degraded by the proteasome. The NPLOC4-UFD1-VCP complex regulates spindle disassembly at the end of mitosis and is necessary for the formation of a closed nuclear envelope. Acts as a negative regulator of type I interferon production via the complex formed with VCP and UFD1, which binds to RIGI and recruits RNF125 to promote ubiquitination and degradation of RIGI. The sequence is that of Nuclear protein localization protein 4 homolog (Nploc4) from Mus musculus (Mouse).